Reading from the N-terminus, the 880-residue chain is Alanine--tRNA ligase (880 aa).

The Zn(2+) site is built by H566, H570, C668, and H672.

The protein belongs to the class-II aminoacyl-tRNA synthetase family. Zn(2+) serves as cofactor.

It localises to the cytoplasm. The enzyme catalyses tRNA(Ala) + L-alanine + ATP = L-alanyl-tRNA(Ala) + AMP + diphosphate. Catalyzes the attachment of alanine to tRNA(Ala) in a two-step reaction: alanine is first activated by ATP to form Ala-AMP and then transferred to the acceptor end of tRNA(Ala). Also edits incorrectly charged Ser-tRNA(Ala) and Gly-tRNA(Ala) via its editing domain. This chain is Alanine--tRNA ligase, found in Nostoc punctiforme (strain ATCC 29133 / PCC 73102).